We begin with the raw amino-acid sequence, 421 residues long: UDP-N-acetylglucosamine 1-carboxyvinyltransferase (421 aa).

Residue 22–23 (KN) coordinates phosphoenolpyruvate. Arg93 lines the UDP-N-acetyl-alpha-D-glucosamine pocket. Cys117 serves as the catalytic Proton donor. Cys117 carries the post-translational modification 2-(S-cysteinyl)pyruvic acid O-phosphothioketal. UDP-N-acetyl-alpha-D-glucosamine contacts are provided by residues 122–126 (RPVDL), Asp308, and Ile330.

Belongs to the EPSP synthase family. MurA subfamily.

Its subcellular location is the cytoplasm. The enzyme catalyses phosphoenolpyruvate + UDP-N-acetyl-alpha-D-glucosamine = UDP-N-acetyl-3-O-(1-carboxyvinyl)-alpha-D-glucosamine + phosphate. It functions in the pathway cell wall biogenesis; peptidoglycan biosynthesis. Functionally, cell wall formation. Adds enolpyruvyl to UDP-N-acetylglucosamine. In Pseudomonas syringae pv. tomato (strain ATCC BAA-871 / DC3000), this protein is UDP-N-acetylglucosamine 1-carboxyvinyltransferase.